We begin with the raw amino-acid sequence, 371 residues long: Cytoplasmic tRNA 2-thiolation protein 1 (371 aa).

It belongs to the TtcA family. CTU1/NCS6/ATPBD3 subfamily.

The protein resides in the cytoplasm. The protein operates within tRNA modification; 5-methoxycarbonylmethyl-2-thiouridine-tRNA biosynthesis. Plays a central role in 2-thiolation of mcm(5)S(2)U at tRNA wobble positions of tRNA(Lys), tRNA(Glu) and tRNA(Gln). Directly binds tRNAs and probably acts by catalyzing adenylation of tRNAs, an intermediate required for 2-thiolation. It is unclear whether it acts as a sulfurtransferase that transfers sulfur from thiocarboxylated URM1 onto the uridine of tRNAs at wobble position. Prior mcm(5) tRNA modification by the elongator complex is required for 2-thiolation. May also be involved in protein urmylation. This chain is Cytoplasmic tRNA 2-thiolation protein 1, found in Kluyveromyces lactis (strain ATCC 8585 / CBS 2359 / DSM 70799 / NBRC 1267 / NRRL Y-1140 / WM37) (Yeast).